Here is a 598-residue protein sequence, read N- to C-terminus: Arginine--tRNA ligase (598 aa).

Residues 131–141 (ANPTGPMHVGH) carry the 'HIGH' region motif. Positions 288–308 (KLPPPKSKKGQPPAQPQPDEE) are disordered.

Belongs to the class-I aminoacyl-tRNA synthetase family. In terms of assembly, monomer.

It is found in the cytoplasm. The enzyme catalyses tRNA(Arg) + L-arginine + ATP = L-arginyl-tRNA(Arg) + AMP + diphosphate. The protein is Arginine--tRNA ligase of Anaeromyxobacter sp. (strain K).